We begin with the raw amino-acid sequence, 147 residues long: MAESSGNPPAERIGYITRVQSFSACHRLHSLRLSDEENKEVYGKCNNPYGHGHNYKVEVTVRGKIDPVTGMVMNLTDLKKCIEEVIMIPLDHKNLDKDVPYFADVVSTTENLAVYIWDNMAKALPASLPYEIRIHETDKNIVVYRGE.

Residue H26 participates in Zn(2+) binding. C45 (proton acceptor) is an active-site residue. H51 and H53 together coordinate Zn(2+). Catalysis depends on charge relay system residues H92 and E136.

It belongs to the PTPS family. In terms of assembly, homohexamer formed of two homotrimers in a head to head fashion. Requires Zn(2+) as cofactor.

The catalysed reaction is 7,8-dihydroneopterin 3'-triphosphate = 6-pyruvoyl-5,6,7,8-tetrahydropterin + triphosphate + H(+). Its pathway is cofactor biosynthesis; tetrahydrobiopterin biosynthesis; tetrahydrobiopterin from 7,8-dihydroneopterin triphosphate: step 1/3. Its function is as follows. Involved in the biosynthesis of tetrahydrobiopterin, an essential cofactor of aromatic amino acid hydroxylases. Catalyzes the transformation of 7,8-dihydroneopterin triphosphate into 6-pyruvoyl tetrahydropterin. The protein is 6-pyruvoyl tetrahydrobiopterin synthase (pts) of Poecilia reticulata (Guppy).